The chain runs to 336 residues: Phospholipase A1 (336 aa).

A signal peptide spans 1-27; that stretch reads MEENMNLKYLLLFVYFVQVLNCCYGHG. Positions 28–36 are excised as a propeptide; that stretch reads DPLSYELDR. Residues Cys40 and Cys123 are joined by a disulfide bond. The active-site Nucleophile is the Ser173. Catalysis depends on Asp201, which acts as the Charge relay system. Intrachain disulfides connect Cys212-Cys217 and Cys255-Cys263. His265 acts as the Charge relay system in catalysis. Intrachain disulfides connect Cys280/Cys304, Cys281/Cys329, and Cys297/Cys302.

Belongs to the AB hydrolase superfamily. Lipase family. Expressed by the venom gland.

The protein resides in the secreted. It carries out the reaction a 1,2-diacyl-sn-glycero-3-phosphocholine + H2O = a 2-acyl-sn-glycero-3-phosphocholine + a fatty acid + H(+). In terms of biological role, catalyzes the hydrolysis of phosphatidylcholine with phospholipase A1 activity. Induces hemolytic activity. Acts as an allergen. This Vespula vulgaris (Yellow jacket) protein is Phospholipase A1.